A 340-amino-acid chain; its full sequence is PI-PLC X domain-containing protein 2 (340 aa).

Residues 42–215 (HLHNVPLSNL…KYQVLIFYHC (174 aa)) form the PI-PLC X-box domain. Catalysis depends on residues His-57 and His-132.

In terms of tissue distribution, expressed at highest levels in brain, followed by stomach and small intestine. Detected at low levels in kidney, ey, thymus and slkeletal muscle.

The protein resides in the nucleus. It carries out the reaction a 1,2-diacyl-sn-glycero-3-phospho-(1D-myo-inositol) + H2O = 1D-myo-inositol 1-phosphate + a 1,2-diacyl-sn-glycerol + H(+). Functionally, catalyzes the hydrolysis of inositol from phosphatidylinositol (1,2-diacyl-sn-glycero-3-phospho-(1D-myo-inositol), PI). Could also hydrolyze various multi-phosphorylated derivatives of PI, such as phosphatidylinositol-4,5 bisphosphate (PIP2), releasing inositol-1,4,5-trisphosphate (IP3) and the protein kinase C activator diacylglycerol (DAG), therefore mediating cell signaling. The chain is PI-PLC X domain-containing protein 2 (Plcxd2) from Mus musculus (Mouse).